A 464-amino-acid chain; its full sequence is L-cysteine desulfhydrase-like protein lolT2 (464 aa).

Lys227 bears the N6-(pyridoxal phosphate)lysine mark.

This sequence belongs to the class-V pyridoxal-phosphate-dependent aminotransferase family. Pyridoxal 5'-phosphate serves as cofactor.

It functions in the pathway alkaloid biosynthesis. Functionally, L-cysteine desulfhydrase-like protein; part of the gene cluster that mediates the biosynthesis of loline alkaloids, potent insecticidal agents composed of a pyrrolizidine ring system and an uncommon ether bridge linking carbons 2 and 7. Lolines are structurally differentiated by the various modifications of the L-amino group and include norloline, loline, N-methylloline, N-acetylloline, N-acetylnorloline, and N-formylloline. The first committed step is the condensation of O-acetyl-L-homoserine (derived from L-aspartic acid) and L-proline, probably catalyzed by the gamma-type pyridoxal 5'-phosphate(PLP)-dependent enzyme lolC, to give the diamino diacid, NACPP. Ensuing cyclization, decarboxylation, and acetylation steps yield 1-exo-acetamidopyrrolizidine (AcAP). LolO is required for installation of the ether bridge upon the pathway intermediate, 1-exo-acetamidopyrrolizidine (AcAP). In sequential 2-oxoglutarate- and O(2)-consuming steps, lolO removes hydrogens from C2 and C7 of AcAP to form both carbon-oxygen bonds in N-acetylnorloline (NANL), the precursor to all other lolines. The enzymes lolD, lolE, lolF and lolT have also been proposed to be involved in the ether-bridge installation. Further processing of the exocyclic moiety of NANL by fungal N-acetamidase (LolN), methyltransferase (LolM), and cytochrome P450 (LolP) enzymes, with occasional involvement of a plant acetyltransferase, generates the other known lolines. LolN transforms NANL to norlonine which is monomethylated and dimethylated to respectively lonine and N-methyllonine (NML) by lolM. LolP catalyzes hydroxylation of the methyl group in N-methylloline (NML) and further oxygenation to N-formylloline (NFL). A plant acetyltransferase is responsible for the acetylation of loline to form N-acetylloline (NAL). LolA might interact with aspartate kinase to prevent feedback inhibition of its activity by these end products and thereby promote production of L-homoserine from L-aspartate. This is L-cysteine desulfhydrase-like protein lolT2 from Epichloe uncinata (Endophyte fungus).